The primary structure comprises 475 residues: UDP-N-acetylmuramate--L-alanine ligase (475 aa).

An ATP-binding site is contributed by 112-118 (GTHGKTT).

It belongs to the MurCDEF family.

It localises to the cytoplasm. It carries out the reaction UDP-N-acetyl-alpha-D-muramate + L-alanine + ATP = UDP-N-acetyl-alpha-D-muramoyl-L-alanine + ADP + phosphate + H(+). Its pathway is cell wall biogenesis; peptidoglycan biosynthesis. Cell wall formation. The sequence is that of UDP-N-acetylmuramate--L-alanine ligase from Methylobacillus flagellatus (strain ATCC 51484 / DSM 6875 / VKM B-1610 / KT).